Here is a 142-residue protein sequence, read N- to C-terminus: ATP synthase F(0) complex subunit C3, mitochondrial (142 aa).

The N-terminal 67 residues, 1–67 (MFACAKLACT…REFQTSAISR (67 aa)), are a transit peptide targeting the mitochondrion. A helical membrane pass occupies residues 83–103 (VGVAGSGAGIGTVFGSLIIGY). Lys110 is modified (N6,N6,N6-trimethyllysine). The helical transmembrane segment at 118-138 (ILGFALSEAMGLFCLMVAFLI) threads the bilayer.

It belongs to the ATPase C chain family. As to quaternary structure, F-type ATPases have 2 components, CF(1) - the catalytic core - and CF(0) - the membrane proton channel. CF(1) has five subunits: alpha(3), beta(3), gamma(1), delta(1), epsilon(1). CF(0) has three main subunits: a, b and c. Interacts with TMEM70 and TMEM242. Post-translationally, trimethylated by ATPSCKMT at Lys-110. Methylation is required for proper incorporation of the C subunit into the ATP synthase complex and mitochondrial respiration.

It localises to the mitochondrion membrane. Functionally, mitochondrial membrane ATP synthase (F(1)F(0) ATP synthase or Complex V) produces ATP from ADP in the presence of a proton gradient across the membrane which is generated by electron transport complexes of the respiratory chain. F-type ATPases consist of two structural domains, F(1) - containing the extramembraneous catalytic core and F(0) - containing the membrane proton channel, linked together by a central stalk and a peripheral stalk. During catalysis, ATP synthesis in the catalytic domain of F(1) is coupled via a rotary mechanism of the central stalk subunits to proton translocation. Part of the complex F(0) domain. A homomeric c-ring of probably 10 subunits is part of the complex rotary element. The sequence is that of ATP synthase F(0) complex subunit C3, mitochondrial from Pongo abelii (Sumatran orangutan).